Consider the following 267-residue polypeptide: Small ribosomal subunit protein uS2 (267 aa).

A disordered region spans residues 232–267 (ATVREEEFADAPAEDAKPARRAPAKKAAADKGEAQA). The segment covering 258-267 (AAADKGEAQA) has biased composition (basic and acidic residues).

It belongs to the universal ribosomal protein uS2 family.

This is Small ribosomal subunit protein uS2 from Stenotrophomonas maltophilia (strain R551-3).